Reading from the N-terminus, the 247-residue chain is tRNA pseudouridine synthase A (247 aa).

The active-site Nucleophile is D52. Y113 is a binding site for substrate.

This sequence belongs to the tRNA pseudouridine synthase TruA family. Homodimer.

The catalysed reaction is uridine(38/39/40) in tRNA = pseudouridine(38/39/40) in tRNA. Formation of pseudouridine at positions 38, 39 and 40 in the anticodon stem and loop of transfer RNAs. The sequence is that of tRNA pseudouridine synthase A from Rhizobium meliloti (strain 1021) (Ensifer meliloti).